A 226-amino-acid polypeptide reads, in one-letter code: High affinity heme transporter (226 aa).

Positions 1–20 (MISLKIYFVLIFLFLKGINS) are cleaved as a signal peptide. The interval 72–101 (CDTTILSETNNVTGSCYVANCANDTVLEIC) is heme binding. The GPI-anchor amidated serine moiety is linked to residue serine 199. Positions 200-226 (SASSTIFKPSYFISCLLSVGLYLVLNF) are cleaved as a propeptide — removed in mature form.

The protein resides in the cell membrane. Its subcellular location is the vacuole membrane. Functionally, high affinity heme transporter involved in the assimilation of exogenous heme during conditions of low cellular iron. This is High affinity heme transporter from Schizosaccharomyces pombe (strain 972 / ATCC 24843) (Fission yeast).